The sequence spans 519 residues: Membrane-bound glycerophospholipid O-acyltransferase 2 (519 aa).

The next 6 membrane-spanning stretches (helical) occupy residues 22 to 42 (PIDQVNFVVCQLFALLAAVWF), 61 to 81 (TLLGLYLAFFCFGWYALHFLV), 88 to 108 (CIMIIAGVESMQQCCFVFALG), 184 to 204 (FMGILAGPLCSYKDYIAFIEG), 236 to 256 (LLVCGLSLLFHLTISNMLPVE), and 263 to 283 (FQATASWPTKATYLYVSLLAA). Catalysis depends on residues Asn341 and His372. The next 3 membrane-spanning stretches (helical) occupy residues 365-385 (FFLSAIWHGVYPGYYLTFLTG), 415-435 (LITWVATQITISYTVVPFVLL), and 443-463 (FYSSWYYCLHVCSILVLLLLP). The tract at residues 497–519 (FSTMNNVCNQNRDTGSRHSSLTQ) is disordered.

Belongs to the membrane-bound acyltransferase family. Highly expressed in epididymis, brain, testis, and ovary.

Its subcellular location is the endoplasmic reticulum membrane. The catalysed reaction is a 1-acyl-sn-glycero-3-phosphocholine + an acyl-CoA = a 1,2-diacyl-sn-glycero-3-phosphocholine + CoA. The enzyme catalyses a 1-acyl-sn-glycero-3-phosphoethanolamine + an acyl-CoA = a 1,2-diacyl-sn-glycero-3-phosphoethanolamine + CoA. It carries out the reaction a 1-O-(1Z-alkenyl)-sn-glycero-3-phosphocholine + (9Z)-octadecenoyl-CoA = 1-O-(1Z)-alkenyl-2-(9Z)-octadecenoyl-sn-glycero-3-phosphocholine + CoA. It catalyses the reaction a 1-O-(1Z-alkenyl)-sn-glycero-3-phosphoethanolamine + (9Z)-octadecenoyl-CoA = 1-O-(1Z)-alkenyl-2-(9Z)-octadecenoyl-sn-glycero-3-phosphoethanolamine + CoA. The catalysed reaction is 1-octadecanoyl-sn-glycero-3-phosphoethanolamine + (9Z)-octadecenoyl-CoA = 1-octadecanoyl-2-(9Z-octadecenoyl)-sn-glycero-3-phosphoethanolamine + CoA. The enzyme catalyses 1-octadecanoyl-sn-glycero-3-phosphocholine + (9Z)-octadecenoyl-CoA = 1-octadecanoyl-2-(9Z-octadecenoyl)-sn-glycero-3-phosphocholine + CoA. It carries out the reaction 1-(9Z-octadecenoyl)-sn-glycero-3-phosphoethanolamine + (9Z)-octadecenoyl-CoA = 1,2-di-(9Z-octadecenoyl)-sn-glycero-3-phosphoethanolamine + CoA. It catalyses the reaction 1-hexadecanoyl-sn-glycero-3-phosphoethanolamine + (9Z)-octadecenoyl-CoA = 1-hexadecanoyl-2-(9Z-octadecenoyl)-sn-glycero-3-phosphoethanolamine + CoA. The catalysed reaction is 1-hexadecanoyl-sn-glycero-3-phosphocholine + (9Z)-octadecenoyl-CoA = 1-hexadecanoyl-2-(9Z-octadecenoyl)-sn-glycero-3-phosphocholine + CoA. The enzyme catalyses (9Z)-hexadecenoyl-CoA + 1-hexadecanoyl-sn-glycero-3-phosphocholine = 1-hexadecanoyl-2-(9Z-hexadecenoyl)-sn-glycero-3-phosphocholine + CoA. It carries out the reaction 1-hexadecanoyl-sn-glycero-3-phosphoethanolamine + (9Z)-hexadecenoyl-CoA = 1-hexadecanoyl-2-(9Z)-hexadecenoyl-sn-glycero-3-phosphoethanolamine + CoA. It catalyses the reaction (9Z,12Z)-octadecadienoyl-CoA + 1-hexadecanoyl-sn-glycero-3-phosphocholine = 1-hexadecanoyl-2-(9Z,12Z-octadecadienoyl)-sn-glycero-3-phosphocholine + CoA. It participates in lipid metabolism; phospholipid metabolism. Its activity is regulated as follows. Partially inhibited by thimerosal. Acyltransferase which catalyzes the transfer of an acyl group from an acyl-CoA to a lysophospholipid leading to the production of a phospholipid and participates in the reacylation step of the phospholipid remodeling pathway also known as the Lands cycle. Catalyzes the acylation of lysophosphatidylcholine (1-acyl-sn-glycero-3-phosphocholine or LPC) and to a lesser extend lysophosphatidylethanolamine (1-acyl-sn-glycero-3-phosphoethanolamine or LPE). Does not acylates lysophosphatidic acid (LPA) and lysophosphatidylserine. Prefers oleoyl-CoA as the acyl donor. May be involved in chondrocyte differentiation. The protein is Membrane-bound glycerophospholipid O-acyltransferase 2 of Mus musculus (Mouse).